A 37-amino-acid polypeptide reads, in one-letter code: Large ribosomal subunit protein bL36 (37 aa).

The protein belongs to the bacterial ribosomal protein bL36 family.

This chain is Large ribosomal subunit protein bL36, found in Bifidobacterium adolescentis (strain ATCC 15703 / DSM 20083 / NCTC 11814 / E194a).